A 113-amino-acid polypeptide reads, in one-letter code: Large ribosomal subunit protein bL19 (113 aa).

Belongs to the bacterial ribosomal protein bL19 family.

Functionally, this protein is located at the 30S-50S ribosomal subunit interface and may play a role in the structure and function of the aminoacyl-tRNA binding site. This Corynebacterium glutamicum (strain R) protein is Large ribosomal subunit protein bL19.